The sequence spans 404 residues: uncharacterized protein (404 aa).

Over residues 262–278 (VSTGDTSPYGTEDSSPA) the composition is skewed to polar residues. Disordered stretches follow at residues 262–307 (VSTG…SPSL) and 320–340 (KKSHSANDSEEFFREDDGGAD). 3 positions are modified to phosphoserine: Ser-268, Ser-276, and Ser-279. A phosphothreonine mark is found at Thr-290 and Thr-293. Phosphoserine occurs at positions 304, 306, 324, 358, and 362. A compositionally biased stretch (basic and acidic residues) spans 320 to 336 (KKSHSANDSEEFFREDD).

This is an uncharacterized protein from Rattus norvegicus (Rat).